The following is a 185-amino-acid chain: ATP-dependent protease subunit HslV (185 aa).

T12 is an active-site residue. Na(+) is bound by residues A168, C171, and T174.

The protein belongs to the peptidase T1B family. HslV subfamily. In terms of assembly, a double ring-shaped homohexamer of HslV is capped on each side by a ring-shaped HslU homohexamer. The assembly of the HslU/HslV complex is dependent on binding of ATP.

The protein localises to the cytoplasm. It carries out the reaction ATP-dependent cleavage of peptide bonds with broad specificity.. With respect to regulation, allosterically activated by HslU binding. Protease subunit of a proteasome-like degradation complex believed to be a general protein degrading machinery. This chain is ATP-dependent protease subunit HslV, found in Ruegeria pomeroyi (strain ATCC 700808 / DSM 15171 / DSS-3) (Silicibacter pomeroyi).